The chain runs to 464 residues: UPF0210 protein Cgl1545/cg1743 (464 aa).

It belongs to the UPF0210 family. In terms of assembly, homodimer.

This chain is UPF0210 protein Cgl1545/cg1743, found in Corynebacterium glutamicum (strain ATCC 13032 / DSM 20300 / JCM 1318 / BCRC 11384 / CCUG 27702 / LMG 3730 / NBRC 12168 / NCIMB 10025 / NRRL B-2784 / 534).